A 238-amino-acid polypeptide reads, in one-letter code: Ribosomal RNA small subunit methyltransferase G (238 aa).

S-adenosyl-L-methionine is bound by residues glycine 106, leucine 111, 157-158 (IE), and arginine 170.

This sequence belongs to the methyltransferase superfamily. RNA methyltransferase RsmG family.

The protein localises to the cytoplasm. The catalysed reaction is guanosine(527) in 16S rRNA + S-adenosyl-L-methionine = N(7)-methylguanosine(527) in 16S rRNA + S-adenosyl-L-homocysteine. Specifically methylates the N7 position of guanine in position 527 of 16S rRNA. This Psychrobacter cryohalolentis (strain ATCC BAA-1226 / DSM 17306 / VKM B-2378 / K5) protein is Ribosomal RNA small subunit methyltransferase G.